Here is a 1212-residue protein sequence, read N- to C-terminus: Nucleolar protein 6 (1212 aa).

Disordered regions lie at residues 1-72 (MGKI…PVSI) and 1156-1212 (KREQ…KSLS). Residues 1197–1212 (LKRKSLIKSRPLKSLS) are compositionally biased toward basic residues.

It belongs to the NRAP family. In terms of assembly, part of the small subunit (SSU) processome, composed of more than 70 proteins and the RNA chaperone small nucleolar RNA (snoRNA) U3.

The protein localises to the nucleus. It localises to the nucleolus. Its subcellular location is the chromosome. In terms of biological role, part of the small subunit (SSU) processome, first precursor of the small eukaryotic ribosomal subunit. During the assembly of the SSU processome in the nucleolus, many ribosome biogenesis factors, an RNA chaperone and ribosomal proteins associate with the nascent pre-rRNA and work in concert to generate RNA folding, modifications, rearrangements and cleavage as well as targeted degradation of pre-ribosomal RNA by the RNA exosome. The sequence is that of Nucleolar protein 6 from Drosophila pseudoobscura pseudoobscura (Fruit fly).